Consider the following 338-residue polypeptide: Lipoate-protein ligase A (338 aa).

One can recognise a BPL/LPL catalytic domain in the interval 29-216 (PATQRVLFLW…AFFAHYGERV (188 aa)). Residues Arg-71, 76-79 (GAVF), and Lys-134 contribute to the ATP site. Lys-134 serves as a coordination point for (R)-lipoate.

Belongs to the LplA family. Monomer.

The protein localises to the cytoplasm. The catalysed reaction is L-lysyl-[lipoyl-carrier protein] + (R)-lipoate + ATP = N(6)-[(R)-lipoyl]-L-lysyl-[lipoyl-carrier protein] + AMP + diphosphate + H(+). It functions in the pathway protein modification; protein lipoylation via exogenous pathway; protein N(6)-(lipoyl)lysine from lipoate: step 1/2. The protein operates within protein modification; protein lipoylation via exogenous pathway; protein N(6)-(lipoyl)lysine from lipoate: step 2/2. Catalyzes both the ATP-dependent activation of exogenously supplied lipoate to lipoyl-AMP and the transfer of the activated lipoyl onto the lipoyl domains of lipoate-dependent enzymes. This is Lipoate-protein ligase A from Shigella boydii serotype 18 (strain CDC 3083-94 / BS512).